A 507-amino-acid polypeptide reads, in one-letter code: ATP synthase subunit alpha, chloroplastic (507 aa).

ATP is bound at residue 170 to 177 (GDRQTGKT).

The protein belongs to the ATPase alpha/beta chains family. In terms of assembly, F-type ATPases have 2 components, CF(1) - the catalytic core - and CF(0) - the membrane proton channel. CF(1) has five subunits: alpha(3), beta(3), gamma(1), delta(1), epsilon(1). CF(0) has four main subunits: a, b, b' and c.

The protein localises to the plastid. It localises to the chloroplast thylakoid membrane. It catalyses the reaction ATP + H2O + 4 H(+)(in) = ADP + phosphate + 5 H(+)(out). Produces ATP from ADP in the presence of a proton gradient across the membrane. The alpha chain is a regulatory subunit. The protein is ATP synthase subunit alpha, chloroplastic of Lemna minor (Common duckweed).